The primary structure comprises 226 residues: Thiopurine S-methyltransferase (226 aa).

S-adenosyl-L-methionine is bound by residues Trp16, Met51, Glu72, and Arg131.

It belongs to the class I-like SAM-binding methyltransferase superfamily. TPMT family.

It is found in the cytoplasm. The catalysed reaction is S-adenosyl-L-methionine + a thiopurine = S-adenosyl-L-homocysteine + a thiopurine S-methylether.. This is Thiopurine S-methyltransferase from Francisella tularensis subsp. novicida (strain U112).